The following is a 135-amino-acid chain: uncharacterized protein (135 aa).

The protein belongs to the MG067/MG068/MG395 family.

This is an uncharacterized protein from Mycoplasma pneumoniae (strain ATCC 29342 / M129 / Subtype 1) (Mycoplasmoides pneumoniae).